The chain runs to 91 residues: Small ribosomal subunit protein bS16 (91 aa).

This sequence belongs to the bacterial ribosomal protein bS16 family.

The protein is Small ribosomal subunit protein bS16 of Latilactobacillus sakei subsp. sakei (strain 23K) (Lactobacillus sakei subsp. sakei).